A 323-amino-acid polypeptide reads, in one-letter code: Caspase-1 (323 aa).

Positions 1–33 (MTDECVTRNYGVGIRSPNGSENRGSFIMADNTD) are excised as a propeptide. Active-site residues include His-154 and Cys-196. The propeptide occupies 203-215 (GGITLEKGVTETD).

Belongs to the peptidase C14A family. Heterotetramer that consists of two anti-parallel arranged heterodimers, each one formed by a 22 kDa (p22) and a 13 kDa (p13) subunit.

Its function is as follows. Involved in the activation cascade of caspases responsible for apoptosis execution. Proteolytically cleaves poly(ADP-ribose) polymerase (PARP). Loss of zygotic DCP-1 function causes larval lethality and melanotic tumors. This is Caspase-1 (Dcp-1) from Drosophila melanogaster (Fruit fly).